The chain runs to 1044 residues: DEMETER-like protein 3 (1044 aa).

The segment covering 1-15 has biased composition (polar residues); it reads MLTDGSQHTYQNGET. The segment at 1 to 107 is disordered; the sequence is MLTDGSQHTY…KPRNPATTRL (107 aa). Basic and acidic residues predominate over residues 16–30; the sequence is KNSKEHERKCDESAH. The segment covering 38–53 has biased composition (basic residues); that stretch reads THKKKEKKNSKEKHGI. Residues 54–66 are compositionally biased toward basic and acidic residues; it reads KHSESEHLQDDIS. Residues 71 to 89 show a composition bias toward basic residues; sequence GKGRRRNSKGTPKKLRFNR. The interval 348–445 is DEMETER; that stretch reads KVNLDPETIK…AFMSVAAKFP (98 aa). [4Fe-4S] cluster is bound by residues C678, C685, C688, and C694. Residues 1024-1044 form a disordered region; the sequence is VRRLHTPPDERGPKFMSDDDI.

This sequence belongs to the DNA glycosylase family. DEMETER subfamily. The cofactor is [4Fe-4S] cluster.

The protein localises to the nucleus. Its function is as follows. Potential transcriptional activator that may act by nicking the target promoter. Catalyzes the release of 5-methylcytosine (5-meC) from DNA by a glycosylase/lyase mechanism. This chain is DEMETER-like protein 3 (DML3), found in Arabidopsis thaliana (Mouse-ear cress).